Consider the following 150-residue polypeptide: UPF0506 protein SJCHGC03047 (150 aa).

A signal peptide spans 1 to 18; that stretch reads MNTCIQLLILCLVTLTNS. N-linked (GlcNAc...) asparagine glycans are attached at residues asparagine 20, asparagine 48, and asparagine 110. Disulfide bonds link cysteine 116–cysteine 130, cysteine 123–cysteine 134, and cysteine 129–cysteine 139.

The protein belongs to the UPF0506 family.

It localises to the secreted. This chain is UPF0506 protein SJCHGC03047, found in Schistosoma japonicum (Blood fluke).